We begin with the raw amino-acid sequence, 565 residues long: 13S globulin seed storage protein 1 (565 aa).

Residues 1 to 20 form the signal peptide; that stretch reads MSTKLILSFSLCLMVLSCSA. 2 cysteine pairs are disulfide-bonded: Cys44–Cys77 and Cys120–Cys384. The Cupin type-1 1 domain occupies 49–331; it reads LTASEPSRRV…FRNVDQETIS (283 aa). Disordered stretches follow at residues 126–224, 271–301, and 356–376; these read SESE…IRDG, GQSKQSREDRRSQRQTREEGSDRQSRESDDD, and EYEEELQRERGDRKRGGSGRS. 3 stretches are compositionally biased toward basic and acidic residues: residues 137-224, 275-297, and 356-370; these read RDQR…IRDG, QSREDRRSQRQTREEGSDRQSRE, and EYEEELQRERGDRKR. The region spanning 390 to 539 is the Cupin type-1 2 domain; that stretch reads QNVNRPSRAD…SYDISTKEAF (150 aa).

Belongs to the 11S seed storage protein (globulins) family. Hexamer; each subunit is composed of an acidic and a basic chain derived from a single precursor and linked by a disulfide bond. In terms of tissue distribution, expressed only in immature seeds.

Functionally, seed storage protein. The sequence is that of 13S globulin seed storage protein 1 (FA02) from Fagopyrum esculentum (Common buckwheat).